The primary structure comprises 208 residues: Small ribosomal subunit protein eS1 (208 aa).

The protein belongs to the eukaryotic ribosomal protein eS1 family.

This is Small ribosomal subunit protein eS1 from Saccharolobus islandicus (strain Y.N.15.51 / Yellowstone #2) (Sulfolobus islandicus).